We begin with the raw amino-acid sequence, 337 residues long: Probable tyrosine--tRNA ligase, cytoplasmic (337 aa).

Tyr-35 contacts L-tyrosine. The short motif at 40 to 48 (ITGKPHIAY) is the 'HIGH' region element. 4 residues coordinate L-tyrosine: Tyr-162, Gln-166, Asp-169, and Gln-184. The 'KMSKS' region motif lies at 218–222 (KMSSS).

It belongs to the class-I aminoacyl-tRNA synthetase family. As to quaternary structure, homodimer.

Its subcellular location is the cytoplasm. The catalysed reaction is tRNA(Tyr) + L-tyrosine + ATP = L-tyrosyl-tRNA(Tyr) + AMP + diphosphate + H(+). This chain is Probable tyrosine--tRNA ligase, cytoplasmic, found in Encephalitozoon cuniculi (strain GB-M1) (Microsporidian parasite).